Here is a 264-residue protein sequence, read N- to C-terminus: MAVTINTLREYKQKGEAFSALTSYDATFAQVVSEAGVDVILIGDSLGMVLQGHDSTLPVTMDQMVYHTSCVARGNKGALIMADMPFMSYGTVADALDNAAELMRAGAHMVKLEGTDWMKDTIEALSERGVPVCAHLGLTPQFVNKFGGYKVQGRDEKAAEAMIEHACELEAAGADLILLECVPAPLAARITQAVKAPVIGIGAGSDTDGQVLVLHDMLGVTTGRKPRFVKNFLAETDSIPEAIAAYAQAVKARTFPAEEHTFKA.

Mg(2+) contacts are provided by D44 and D83. 3-methyl-2-oxobutanoate-binding positions include 44 to 45 (DS), D83, and K111. Mg(2+) is bound at residue E113. E180 serves as the catalytic Proton acceptor.

Belongs to the PanB family. As to quaternary structure, homodecamer; pentamer of dimers. Requires Mg(2+) as cofactor.

The protein resides in the cytoplasm. It carries out the reaction 3-methyl-2-oxobutanoate + (6R)-5,10-methylene-5,6,7,8-tetrahydrofolate + H2O = 2-dehydropantoate + (6S)-5,6,7,8-tetrahydrofolate. It functions in the pathway cofactor biosynthesis; (R)-pantothenate biosynthesis; (R)-pantoate from 3-methyl-2-oxobutanoate: step 1/2. Its function is as follows. Catalyzes the reversible reaction in which hydroxymethyl group from 5,10-methylenetetrahydrofolate is transferred onto alpha-ketoisovalerate to form ketopantoate. This chain is 3-methyl-2-oxobutanoate hydroxymethyltransferase, found in Marinobacter nauticus (strain ATCC 700491 / DSM 11845 / VT8) (Marinobacter aquaeolei).